We begin with the raw amino-acid sequence, 25 residues long: Alpha-lytic protease (25 aa).

Belongs to the peptidase S1 family.

The catalysed reaction is Preferential cleavage: Ala-|-Xaa, Val-|-Xaa in bacterial cell walls, elastin and other proteins.. The protein is Alpha-lytic protease of Achromobacter lyticus.